We begin with the raw amino-acid sequence, 304 residues long: Spore coat protein CotB (304 aa).

It localises to the spore coat. The protein resides in the spore. It is found in the perispore. In terms of biological role, contributes to the formation of thick-exosporium spores. The sequence is that of Spore coat protein CotB from Clostridioides difficile (strain 630) (Peptoclostridium difficile).